The following is a 319-amino-acid chain: Epoxyqueuosine reductase (319 aa).

Aspartate 146 serves as the catalytic Proton donor. The region spanning 188-220 is the 4Fe-4S ferredoxin-type domain; sequence ASLPADQPARSLCGHCQRCLPACPTAAITEPFV. [4Fe-4S] cluster-binding residues include cysteine 200, cysteine 203, cysteine 206, cysteine 210, cysteine 226, cysteine 250, cysteine 253, and cysteine 257.

This sequence belongs to the QueG family. In terms of assembly, monomer. It depends on cob(II)alamin as a cofactor. Requires [4Fe-4S] cluster as cofactor.

Its subcellular location is the cytoplasm. The catalysed reaction is epoxyqueuosine(34) in tRNA + AH2 = queuosine(34) in tRNA + A + H2O. It participates in tRNA modification; tRNA-queuosine biosynthesis. In terms of biological role, catalyzes the conversion of epoxyqueuosine (oQ) to queuosine (Q), which is a hypermodified base found in the wobble positions of tRNA(Asp), tRNA(Asn), tRNA(His) and tRNA(Tyr). The chain is Epoxyqueuosine reductase from Synechococcus sp. (strain RCC307).